A 450-amino-acid polypeptide reads, in one-letter code: UDP-N-acetylmuramoylalanine--D-glutamate ligase (450 aa).

119 to 125 (GSNGKTT) contacts ATP.

It belongs to the MurCDEF family.

The protein resides in the cytoplasm. It catalyses the reaction UDP-N-acetyl-alpha-D-muramoyl-L-alanine + D-glutamate + ATP = UDP-N-acetyl-alpha-D-muramoyl-L-alanyl-D-glutamate + ADP + phosphate + H(+). It participates in cell wall biogenesis; peptidoglycan biosynthesis. Functionally, cell wall formation. Catalyzes the addition of glutamate to the nucleotide precursor UDP-N-acetylmuramoyl-L-alanine (UMA). The polypeptide is UDP-N-acetylmuramoylalanine--D-glutamate ligase (Bacillus thuringiensis (strain Al Hakam)).